Consider the following 455-residue polypeptide: Bifunctional protein GlmU (455 aa).

Residues 1–229 (MYNCAILLAA…FEETMGVNSR (229 aa)) are pyrophosphorylase. UDP-N-acetyl-alpha-D-glucosamine is bound by residues 8 to 11 (LAAG), Lys-22, Gln-73, and 78 to 79 (GT). Position 103 (Asp-103) interacts with Mg(2+). The UDP-N-acetyl-alpha-D-glucosamine site is built by Gly-140, Glu-155, Asn-170, and Asn-227. Asn-227 provides a ligand contact to Mg(2+). A linker region spans residues 230-250 (LQLAEVEAIMRKRINAMHLEN). The segment at 251-455 (GVTIIDPNNT…EDWVKKKDEK (205 aa)) is N-acetyltransferase. 2 residues coordinate UDP-N-acetyl-alpha-D-glucosamine: Arg-332 and Lys-350. His-362 functions as the Proton acceptor in the catalytic mechanism. 2 residues coordinate UDP-N-acetyl-alpha-D-glucosamine: Tyr-365 and Asn-376. Residues 385–386 (NY), Ala-422, and Arg-439 each bind acetyl-CoA.

This sequence in the N-terminal section; belongs to the N-acetylglucosamine-1-phosphate uridyltransferase family. It in the C-terminal section; belongs to the transferase hexapeptide repeat family. In terms of assembly, homotrimer. The cofactor is Mg(2+).

It is found in the cytoplasm. The enzyme catalyses alpha-D-glucosamine 1-phosphate + acetyl-CoA = N-acetyl-alpha-D-glucosamine 1-phosphate + CoA + H(+). It catalyses the reaction N-acetyl-alpha-D-glucosamine 1-phosphate + UTP + H(+) = UDP-N-acetyl-alpha-D-glucosamine + diphosphate. The protein operates within nucleotide-sugar biosynthesis; UDP-N-acetyl-alpha-D-glucosamine biosynthesis; N-acetyl-alpha-D-glucosamine 1-phosphate from alpha-D-glucosamine 6-phosphate (route II): step 2/2. It participates in nucleotide-sugar biosynthesis; UDP-N-acetyl-alpha-D-glucosamine biosynthesis; UDP-N-acetyl-alpha-D-glucosamine from N-acetyl-alpha-D-glucosamine 1-phosphate: step 1/1. It functions in the pathway bacterial outer membrane biogenesis; LPS lipid A biosynthesis. Catalyzes the last two sequential reactions in the de novo biosynthetic pathway for UDP-N-acetylglucosamine (UDP-GlcNAc). The C-terminal domain catalyzes the transfer of acetyl group from acetyl coenzyme A to glucosamine-1-phosphate (GlcN-1-P) to produce N-acetylglucosamine-1-phosphate (GlcNAc-1-P), which is converted into UDP-GlcNAc by the transfer of uridine 5-monophosphate (from uridine 5-triphosphate), a reaction catalyzed by the N-terminal domain. The polypeptide is Bifunctional protein GlmU (Clostridium tetani (strain Massachusetts / E88)).